Consider the following 163-residue polypeptide: Putative 4-hydroxy-4-methyl-2-oxoglutarate aldolase (163 aa).

Substrate is bound by residues 76-79 (GDML) and Arg98. Residue Asp99 coordinates a divalent metal cation.

It belongs to the class II aldolase/RraA-like family. As to quaternary structure, homotrimer. The cofactor is a divalent metal cation.

It carries out the reaction 4-hydroxy-4-methyl-2-oxoglutarate = 2 pyruvate. It catalyses the reaction oxaloacetate + H(+) = pyruvate + CO2. Functionally, catalyzes the aldol cleavage of 4-hydroxy-4-methyl-2-oxoglutarate (HMG) into 2 molecules of pyruvate. Also contains a secondary oxaloacetate (OAA) decarboxylase activity due to the common pyruvate enolate transition state formed following C-C bond cleavage in the retro-aldol and decarboxylation reactions. This is Putative 4-hydroxy-4-methyl-2-oxoglutarate aldolase from Pseudomonas putida (strain GB-1).